The sequence spans 258 residues: Imidazole glycerol phosphate synthase subunit HisF (258 aa).

Catalysis depends on residues aspartate 11 and aspartate 130.

The protein belongs to the HisA/HisF family. As to quaternary structure, heterodimer of HisH and HisF.

The protein resides in the cytoplasm. It catalyses the reaction 5-[(5-phospho-1-deoxy-D-ribulos-1-ylimino)methylamino]-1-(5-phospho-beta-D-ribosyl)imidazole-4-carboxamide + L-glutamine = D-erythro-1-(imidazol-4-yl)glycerol 3-phosphate + 5-amino-1-(5-phospho-beta-D-ribosyl)imidazole-4-carboxamide + L-glutamate + H(+). The protein operates within amino-acid biosynthesis; L-histidine biosynthesis; L-histidine from 5-phospho-alpha-D-ribose 1-diphosphate: step 5/9. IGPS catalyzes the conversion of PRFAR and glutamine to IGP, AICAR and glutamate. The HisF subunit catalyzes the cyclization activity that produces IGP and AICAR from PRFAR using the ammonia provided by the HisH subunit. This chain is Imidazole glycerol phosphate synthase subunit HisF, found in Shigella boydii serotype 4 (strain Sb227).